Reading from the N-terminus, the 490-residue chain is One cut domain family member 3 (490 aa).

Disordered stretches follow at residues 130–155 (GAHGGHPHAHPHPATAPPPPPPQRLA), 193–213 (LSPLPSALPPALHSAPQPPPP), and 287–316 (HGPHSGGGGPGGGGGAGGGSGGPGAGAAAE). Residues 143–152 (ATAPPPPPPQ) show a composition bias toward pro residues. Residues 290–311 (HSGGGGPGGGGGAGGGSGGPGA) are compositionally biased toward gly residues. Positions 309-395 (PGAGAAAEEI…QRMSALRLAA (87 aa)) form a DNA-binding region, CUT. The segment at residues 411–470 (PKKQRLVFTDLQRRTLIAIFKENKRPSKEMQATISQQLGLELNTVSNFFMNARRRCMNRW) is a DNA-binding region (homeobox).

This sequence belongs to the CUT homeobox family. In terms of tissue distribution, specifically expressed in brain, stomach and gut. Within the gut, expressed only in duodenum and jejunum.

The protein localises to the nucleus. Functionally, transcriptional activator. Binds the consensus DNA sequence 5'-DHWATTGAYTWWD-3' on a variety of gene promoters such as those of HNF3B and TTR. In Mus musculus (Mouse), this protein is One cut domain family member 3 (Onecut3).